Here is a 913-residue protein sequence, read N- to C-terminus: Protein translocase subunit SecA (913 aa).

Residues glutamine 87, 105-109, and aspartate 512 each bind ATP; that span reads GEGKT. Cysteine 897, cysteine 899, cysteine 908, and histidine 909 together coordinate Zn(2+).

Belongs to the SecA family. As to quaternary structure, monomer and homodimer. Part of the essential Sec protein translocation apparatus which comprises SecA, SecYEG and auxiliary proteins SecDF-YajC and YidC. It depends on Zn(2+) as a cofactor.

It is found in the cell inner membrane. It localises to the cytoplasm. The catalysed reaction is ATP + H2O + cellular proteinSide 1 = ADP + phosphate + cellular proteinSide 2.. Its function is as follows. Part of the Sec protein translocase complex. Interacts with the SecYEG preprotein conducting channel. Has a central role in coupling the hydrolysis of ATP to the transfer of proteins into and across the cell membrane, serving both as a receptor for the preprotein-SecB complex and as an ATP-driven molecular motor driving the stepwise translocation of polypeptide chains across the membrane. In Pseudomonas savastanoi pv. phaseolicola (strain 1448A / Race 6) (Pseudomonas syringae pv. phaseolicola (strain 1448A / Race 6)), this protein is Protein translocase subunit SecA.